We begin with the raw amino-acid sequence, 177 residues long: Large ribosomal subunit protein uL6 (177 aa).

This sequence belongs to the universal ribosomal protein uL6 family. Part of the 50S ribosomal subunit.

Functionally, this protein binds to the 23S rRNA, and is important in its secondary structure. It is located near the subunit interface in the base of the L7/L12 stalk, and near the tRNA binding site of the peptidyltransferase center. The polypeptide is Large ribosomal subunit protein uL6 (Haemophilus ducreyi (strain 35000HP / ATCC 700724)).